Here is a 480-residue protein sequence, read N- to C-terminus: Glycogen synthase (480 aa).

K15 is an ADP-alpha-D-glucose binding site.

The protein belongs to the glycosyltransferase 1 family. Bacterial/plant glycogen synthase subfamily.

The catalysed reaction is [(1-&gt;4)-alpha-D-glucosyl](n) + ADP-alpha-D-glucose = [(1-&gt;4)-alpha-D-glucosyl](n+1) + ADP + H(+). Its pathway is glycan biosynthesis; glycogen biosynthesis. Functionally, synthesizes alpha-1,4-glucan chains using ADP-glucose. In Rhizobium leguminosarum bv. trifolii (strain WSM2304), this protein is Glycogen synthase.